The chain runs to 158 residues: Endoribonuclease YbeY (158 aa).

Residues His-121, His-125, and His-131 each coordinate Zn(2+).

The protein belongs to the endoribonuclease YbeY family. It depends on Zn(2+) as a cofactor.

The protein localises to the cytoplasm. In terms of biological role, single strand-specific metallo-endoribonuclease involved in late-stage 70S ribosome quality control and in maturation of the 3' terminus of the 16S rRNA. The chain is Endoribonuclease YbeY from Exiguobacterium sibiricum (strain DSM 17290 / CCUG 55495 / CIP 109462 / JCM 13490 / 255-15).